The following is a 1058-amino-acid chain: MSFISKCFICLLFSTYFLPPVNSAVLQVGFLAANDNTTELAPFIGWGQVAGALGVAWSRIVEYGLLPGYETMNLTWVLTNCREADAVGSVINYAEGHAHVVLGPPCVRPAQVAGSVAKYLDFPLILWGPPFDSSLLNQFEYPTIASTTSSTLYQATSLIRLLEYYKWTEIALIYYVARSDLIPRCTPLISDFEGLVNNNDNLTITYRRQMSVITNTSYATALRNLKELARVVIVCLESDEARRNLMISISENGMDGDEYVYIMAESRRAGFASSFWNGTDGKNDLALRAARKFLVMDNQKYNDTTTFVQEVRAAFSRPPFSCPNCTNIDPTVSQVGPLGDALLLYAYALNRSIATGNPNPTGTEFCEVAKGMEFLGFTGKVIINQNSTRTPLFVVYNLDSTDKEMIVMQITEDLDDSKDPVASSVNYYITLVATPAQIWDTWGGTVPLSTPICGFTGTDCPKSFTDQYLAIILGCTAAALVLIIAVISTIVFLVRSKRQEEERLNQLWQVHFSSLVKPPQKNTMHSSRSLQSTVTTSTKVTINSKKDTERHSFYFLNNDSVVARKHNFRATFTKNDRAMFRKMRNVDNDNLCKFIGLSLDSPTLISIWRYCSRGSLQDVIAKGSLQMDWFFKYSLMRDVADAIYYLHHSPIGPHGWLSSSTCLVDERWQVKVSFFGLSAIKQYEVKEQRDFLHTAPEHIRDTNLPITKEMDIYSFAIICSELITKKSAWDLENETFDIEELVYKIKKGGRSPPRPSLETEDEHNGSMSLLVRDCWNENPDQRPTSEQIKTLMKSMNHNRSSNLMDHVFNVLEQYASNLEDEVQARMKELTEEKKRSDVLLYRMLPKQVAEKLKLGQSVEPETFDCVTIFFSDVVSFTTLASRCTPLQVVNLLNDLYTTFDAIIEQHDVYKVETIGDGYLCVSGLPHRNGNEHAKEISSMSFSLLKAIKTFRVPHLPKERINIRVGLHTGPVVTGVVGMTMPRYCLFGDSVNTASRMESNGKPGRVHISTECMKFLTEVIGGYQTEPRGEVIVKGKGAVQTHWLLTDDEIEAKENGESI.

The first 23 residues, methionine 1–serine 23, serve as a signal peptide directing secretion. Topologically, residues valine 25–alanine 470 are extracellular. N-linked (GlcNAc...) asparagine glycosylation is found at asparagine 36, asparagine 73, asparagine 201, asparagine 215, asparagine 277, asparagine 302, asparagine 324, asparagine 350, and asparagine 386. A helical transmembrane segment spans residues isoleucine 471–valine 491. The Cytoplasmic portion of the chain corresponds to phenylalanine 492–isoleucine 1058. The Protein kinase domain maps to glutamate 501–asparagine 809. Residues leucine 811 to leucine 840 are a coiled coil. The region spanning threonine 867–glutamate 997 is the Guanylate cyclase domain.

It belongs to the adenylyl cyclase class-4/guanylyl cyclase family. In terms of tissue distribution, expression in ASER neuron begins at an early larval stage and is maintained in the adult.

The protein resides in the cell membrane. The catalysed reaction is GTP = 3',5'-cyclic GMP + diphosphate. Guanylate cyclase involved in the production of the second messenger cGMP. Regulates chemotaxis responses toward Li(1-), Mg(2+), Cl(1-), Br(1)- and I(1-) salt ions and methionine in ASE right (ASER) sensory neuron. May regulate ASER neuronal activity such as axon sprouting and calcium responses to changes in salt concentrations. In Caenorhabditis elegans, this protein is Receptor-type guanylate cyclase gcy-22.